The sequence spans 104 residues: Flagellar hook-basal body complex protein FliE (104 aa).

The protein belongs to the FliE family.

It localises to the bacterial flagellum basal body. This is Flagellar hook-basal body complex protein FliE from Escherichia fergusonii (strain ATCC 35469 / DSM 13698 / CCUG 18766 / IAM 14443 / JCM 21226 / LMG 7866 / NBRC 102419 / NCTC 12128 / CDC 0568-73).